Here is a 706-residue protein sequence, read N- to C-terminus: Glutamine-dependent NAD(+) synthetase (706 aa).

Residues 5–275 (VTVATCALNQ…VEVLTATLDL (271 aa)) enclose the CN hydrolase domain. E45 serves as the catalytic Proton acceptor; for glutaminase activity. K114 serves as the catalytic For glutaminase activity. C175 (nucleophile; for glutaminase activity) is an active-site residue. Residues 325 to 706 (YHSPEEEISL…AEPQSLDGVD (382 aa)) are ligase. 355–362 (PLSGGVDS) is a binding site for ATP. The active site involves S357.

It in the C-terminal section; belongs to the NAD synthetase family. As to quaternary structure, homohexamer.

It carries out the reaction deamido-NAD(+) + L-glutamine + ATP + H2O = L-glutamate + AMP + diphosphate + NAD(+) + H(+). Its pathway is cofactor biosynthesis; NAD(+) biosynthesis; NAD(+) from deamido-NAD(+) (L-Gln route): step 1/1. Functionally, catalyzes the final step of the nicotinamide adenine dinucleotide (NAD) de novo synthesis pathway, the ATP-dependent amidation of deamido-NAD using L-glutamine as a nitrogen source. The polypeptide is Glutamine-dependent NAD(+) synthetase (NADSYN1) (Homo sapiens (Human)).